The chain runs to 256 residues: MNNDVFPNKFKAALAAKQVQIGCWSALSNPISTEVLGLAGFDWLVLDGEHAPNDISTFIPQLMALKGSASAPVVRVPTNEPVIIKRLLDIGFYNFLIPFVETKEKAELAVASTRYPPEGIRGVSVSHRANMFGTVADYFAQSNKNITILVQIESQQGVDNVDAIAATEGVDGIFVGPSDLAAALGHLGNASHPDVQKAIQHIFNRASAHGKPSGILAPVEADARRYLEWGATFVAVGSDLGVFRSATQKLADTFKK.

His50 acts as the Proton acceptor in catalysis. Gln151 contributes to the substrate binding site. Glu153 is a binding site for Mg(2+). Ser178 and Asp179 together coordinate substrate. Asp179 serves as a coordination point for Mg(2+).

The protein belongs to the HpcH/HpaI aldolase family. KDGluc aldolase subfamily. As to quaternary structure, homohexamer; trimer of dimers. Mg(2+) serves as cofactor.

It catalyses the reaction 5-dehydro-4-deoxy-D-glucarate = 2-hydroxy-3-oxopropanoate + pyruvate. The enzyme catalyses 2-dehydro-3-deoxy-D-glucarate = 2-hydroxy-3-oxopropanoate + pyruvate. It participates in carbohydrate acid metabolism; galactarate degradation; D-glycerate from galactarate: step 2/3. Catalyzes the reversible retro-aldol cleavage of both 5-keto-4-deoxy-D-glucarate and 2-keto-3-deoxy-D-glucarate to pyruvate and tartronic semialdehyde. The sequence is that of 5-keto-4-deoxy-D-glucarate aldolase from Escherichia coli (strain ATCC 8739 / DSM 1576 / NBRC 3972 / NCIMB 8545 / WDCM 00012 / Crooks).